Consider the following 302-residue polypeptide: MFRKQNLKWLGVLATIIMTFVQLGGALVTKTGSEDGCGSSWPLCNGALLPENLPIQTIIELSHRAVSAISLIVVLWLVITAWKNIGYIKEIKPLSIISVGFLLVQALVGAAAVIWQQNPYVLALHFGISLISFSSVFLMTLIIFSIDKKYEADILFIHKPLRILTWLMAIIVYLTIYTGALVRHTKSSLAYGAWPIPFDDIVPHNAHDWVQFSHRGMALITFIWIMITFIHAIKNYSDNRTVRYGYTASFILVILQVITGALSVITNVNLIIALFHALFITYLFGMIAYFILLMLRTTRSQK.

Residues 1-8 (MFRKQNLK) are Cytoplasmic-facing. A helical transmembrane segment spans residues 9–29 (WLGVLATIIMTFVQLGGALVT). Residues 30–67 (KTGSEDGCGSSWPLCNGALLPENLPIQTIIELSHRAVS) are Extracellular-facing. Residues C37 and C44 are joined by a disulfide bond. The active site involves E60. A heme o-binding site is contributed by H63. The chain crosses the membrane as a helical span at residues 68-88 (AISLIVVLWLVITAWKNIGYI). Residues 89–93 (KEIKP) lie on the Cytoplasmic side of the membrane. Residues 94-114 (LSIISVGFLLVQALVGAAAVI) form a helical membrane-spanning segment. The Extracellular segment spans residues 115-125 (WQQNPYVLALH). H125 is a binding site for heme o. Residues 126–146 (FGISLISFSSVFLMTLIIFSI) traverse the membrane as a helical segment. The Cytoplasmic portion of the chain corresponds to 147–161 (DKKYEADILFIHKPL). The helical transmembrane segment at 162 to 182 (RILTWLMAIIVYLTIYTGALV) threads the bilayer. Over 183–215 (RHTKSSLAYGAWPIPFDDIVPHNAHDWVQFSHR) the chain is Extracellular. H214 contributes to the heme b binding site. The helical transmembrane segment at 216-236 (GMALITFIWIMITFIHAIKNY) threads the bilayer. Topologically, residues 237–244 (SDNRTVRY) are cytoplasmic. Residues 245–265 (GYTASFILVILQVITGALSVI) form a helical membrane-spanning segment. Over 266-270 (TNVNL) the chain is Extracellular. The helical transmembrane segment at 271–291 (IIALFHALFITYLFGMIAYFI) threads the bilayer. A heme b-binding site is contributed by H276. Topologically, residues 292–302 (LLMLRTTRSQK) are cytoplasmic.

It belongs to the COX15/CtaA family. Type 1 subfamily. In terms of assembly, interacts with CtaB. It depends on heme b as a cofactor.

Its subcellular location is the cell membrane. It carries out the reaction Fe(II)-heme o + 2 A + H2O = Fe(II)-heme a + 2 AH2. The protein operates within porphyrin-containing compound metabolism; heme A biosynthesis; heme A from heme O: step 1/1. Functionally, catalyzes the conversion of heme O to heme A by two successive hydroxylations of the methyl group at C8. The first hydroxylation forms heme I, the second hydroxylation results in an unstable dihydroxymethyl group, which spontaneously dehydrates, resulting in the formyl group of heme A. The polypeptide is Heme A synthase (Staphylococcus epidermidis (strain ATCC 35984 / DSM 28319 / BCRC 17069 / CCUG 31568 / BM 3577 / RP62A)).